The sequence spans 622 residues: UvrABC system protein C (622 aa).

The region spanning 13-92 (DKPGVYLMKN…IKENRPKYNV (80 aa)) is the GIY-YIG domain. Positions 205-240 (DELIKKIEEKMKRAAEKMDFEGAAHYRDQRQALLDI) constitute a UVR domain.

It belongs to the UvrC family. As to quaternary structure, interacts with UvrB in an incision complex.

Its subcellular location is the cytoplasm. In terms of biological role, the UvrABC repair system catalyzes the recognition and processing of DNA lesions. UvrC both incises the 5' and 3' sides of the lesion. The N-terminal half is responsible for the 3' incision and the C-terminal half is responsible for the 5' incision. This Alkaliphilus metalliredigens (strain QYMF) protein is UvrABC system protein C.